The chain runs to 122 residues: LYR motif-containing protein 1 (122 aa).

Belongs to the complex I LYR family.

This Xenopus laevis (African clawed frog) protein is LYR motif-containing protein 1 (lyrm1).